A 141-amino-acid polypeptide reads, in one-letter code: Large ribosomal subunit protein uL11 (141 aa).

Belongs to the universal ribosomal protein uL11 family. Part of the ribosomal stalk of the 50S ribosomal subunit. Interacts with L10 and the large rRNA to form the base of the stalk. L10 forms an elongated spine to which L12 dimers bind in a sequential fashion forming a multimeric L10(L12)X complex. One or more lysine residues are methylated.

In terms of biological role, forms part of the ribosomal stalk which helps the ribosome interact with GTP-bound translation factors. This is Large ribosomal subunit protein uL11 from Ruegeria sp. (strain TM1040) (Silicibacter sp.).